Consider the following 382-residue polypeptide: Galactokinase (382 aa).

34 to 37 (EHTD) is a binding site for substrate. ATP is bound at residue 124–130 (GAGLSSS). 2 residues coordinate Mg(2+): S130 and E162. D174 serves as the catalytic Proton acceptor. Y223 contributes to the substrate binding site.

The protein belongs to the GHMP kinase family. GalK subfamily.

Its subcellular location is the cytoplasm. It carries out the reaction alpha-D-galactose + ATP = alpha-D-galactose 1-phosphate + ADP + H(+). It functions in the pathway carbohydrate metabolism; galactose metabolism. In terms of biological role, catalyzes the transfer of the gamma-phosphate of ATP to D-galactose to form alpha-D-galactose-1-phosphate (Gal-1-P). This chain is Galactokinase, found in Escherichia coli O17:K52:H18 (strain UMN026 / ExPEC).